The chain runs to 247 residues: 2,3-bisphosphoglycerate-dependent phosphoglycerate mutase (247 aa).

Substrate is bound by residues 8-15 (RHGESTWN), 21-22 (TG), Arg60, 87-90 (ERHY), Lys98, 114-115 (RR), and 183-184 (GN). His9 functions as the Tele-phosphohistidine intermediate in the catalytic mechanism. Glu87 (proton donor/acceptor) is an active-site residue.

The protein belongs to the phosphoglycerate mutase family. BPG-dependent PGAM subfamily. Homodimer.

The catalysed reaction is (2R)-2-phosphoglycerate = (2R)-3-phosphoglycerate. The protein operates within carbohydrate degradation; glycolysis; pyruvate from D-glyceraldehyde 3-phosphate: step 3/5. Functionally, catalyzes the interconversion of 2-phosphoglycerate and 3-phosphoglycerate. This chain is 2,3-bisphosphoglycerate-dependent phosphoglycerate mutase, found in Methylibium petroleiphilum (strain ATCC BAA-1232 / LMG 22953 / PM1).